We begin with the raw amino-acid sequence, 108 residues long: Peptidyl-prolyl cis-trans isomerase FKBP1A (108 aa).

The PPIase FKBP-type domain occupies 20-108 (GQTCVVHYTG…VFDVELLKLE (89 aa)). Position 53 is an N6-acetyllysine; alternate (Lys-53). Position 53 is an N6-succinyllysine; alternate (Lys-53).

It belongs to the FKBP-type PPIase family. FKBP1 subfamily. In terms of assembly, interacts with TGFBR1; prevents TGFBR1 phosphorylation by TGFBR2 and stabilizes it in the inactive conformation. Interacts with ACVR1B and SMAD7. Identified in a complex composed of RYR1, PDE4D, PKA, FKBP1A and protein phosphatase 1 (PP1). Interacts directly with RYR2 and RYR3. Interacts directly with RYR1. Interacts with GLMN; rapamycin and FK506 abolish the interaction with GLMN in a dose dependent manner.

Its subcellular location is the cytoplasm. The protein localises to the cytosol. It is found in the sarcoplasmic reticulum membrane. The enzyme catalyses [protein]-peptidylproline (omega=180) = [protein]-peptidylproline (omega=0). Its activity is regulated as follows. Inhibited by both FK506 and rapamycin. Its function is as follows. Keeps in an inactive conformation TGFBR1, the TGF-beta type I serine/threonine kinase receptor, preventing TGF-beta receptor activation in absence of ligand. Recruits SMAD7 to ACVR1B which prevents the association of SMAD2 and SMAD3 with the activin receptor complex, thereby blocking the activin signal. May modulate the RYR1 calcium channel activity. PPIases accelerate the folding of proteins. It catalyzes the cis-trans isomerization of proline imidic peptide bonds in oligopeptides. This Mus musculus (Mouse) protein is Peptidyl-prolyl cis-trans isomerase FKBP1A (Fkbp1a).